Here is a 1053-residue protein sequence, read N- to C-terminus: Mediator of RNA polymerase II transcription subunit 16 (1053 aa).

Positions Lys139–Pro170 are disordered. Positions Gly142–Lys151 are enriched in basic and acidic residues.

The protein belongs to the Mediator complex subunit 16 family. Component of the Mediator complex.

It is found in the nucleus. In terms of biological role, component of the Mediator complex, a coactivator involved in the regulated transcription of nearly all RNA polymerase II-dependent genes. Mediator functions as a bridge to convey information from gene-specific regulatory proteins to the basal RNA polymerase II transcription machinery. Mediator is recruited to promoters by direct interactions with regulatory proteins and serves as a scaffold for the assembly of a functional preinitiation complex with RNA polymerase II and the general transcription factors. In Candida albicans (strain SC5314 / ATCC MYA-2876) (Yeast), this protein is Mediator of RNA polymerase II transcription subunit 16 (SIN4).